Reading from the N-terminus, the 351-residue chain is Histidine-rich glycoprotein (351 aa).

A signal peptide spans 1–23 (MFTSLKKVATFSFLVWISQYSGS). Positions 24-47 (NSCSSSLVKHIPQTGSNLTFDRVL) are excised as a propeptide. Asn40 carries N-linked (GlcNAc...) asparagine glycosylation. A compositionally biased stretch (basic and acidic residues) spans 57–91 (LHEEHHHHHPEEHHEPHHEEHHHHHPEEHHEPHHE). Positions 57–351 (LHEEHHHHHP…DAHHHHHHHH (295 aa)) are disordered. Repeat copies occupy residues 59–74 (EEHH…EPHH), 75–90 (EEHH…EPHH), 91–107 (EEHH…HHHH), 108–123 (PPHH…HHHH), 124–138 (AAHH…HHHH), and 139–153 (AAHH…HHHH). The tract at residues 59 to 90 (EEHHHHHPEEHHEPHHEEHHHHHPEEHHEPHH) is 2 X 16 AA tandem repeats. The 2 X 17 AA tandem repeats stretch occupies residues 91–123 (EEHHHHHPHPHHHHHHHPPHHHHHLGHHHHHHH). Residues 92-351 (EHHHHHPHPH…DAHHHHHHHH (260 aa)) show a composition bias toward basic residues. The segment at 124 to 153 (AAHHHHHEEHHHHHHAAHHHHHEEHHHHHH) is 2 X 15 AA tandem repeats. Positions 173-351 (APHHHHHHHH…DAHHHHHHHH (179 aa)) are 18 X 10 AA tandem repeats.

The polypeptide is Histidine-rich glycoprotein (Plasmodium lophurae).